The chain runs to 75 residues: uncharacterized protein (75 aa).

This is an uncharacterized protein from Treponema pallidum (strain Nichols).